The following is a 205-amino-acid chain: Glycerol-3-phosphate acyltransferase (205 aa).

Over 1–3 (MSA) the chain is Periplasmic. Residues 4–24 (IAPGMILIAYLCGSISSAILV) form a helical membrane-spanning segment. Topologically, residues 25–52 (CRLCGLPDPRTSGSGNPGATNVLRIGGK) are cytoplasmic. The chain crosses the membrane as a helical span at residues 53 to 73 (GAAVAVLIFDVLKGMLPVWGA). The Periplasmic portion of the chain corresponds to 74–80 (YELGVSP). A helical membrane pass occupies residues 81–101 (FWLGLIAIAACLGHIWPVFFG). Over 102–111 (FKGGKGVATA) the chain is Cytoplasmic. A helical transmembrane segment spans residues 112 to 132 (FGAIAPISWDLTGVMAGTWLL). Residues 133-137 (TVLLS) are Periplasmic-facing. Residues 138–158 (GYSSLGAIVSALIAPFYVWWF) form a helical membrane-spanning segment. Residues 159 to 205 (KPQFTFPVSMLSCLILLRHHDNIQRLWRRQETKIWTKFKRKREKDPE) are Cytoplasmic-facing.

It belongs to the PlsY family. As to quaternary structure, probably interacts with PlsX.

It is found in the cell inner membrane. The enzyme catalyses sn-glycerol 3-phosphate + an acyl-CoA = a 1-acyl-sn-glycero-3-phosphate + CoA. The catalysed reaction is a fatty acyl-[ACP] + sn-glycerol 3-phosphate = a 1-acyl-sn-glycero-3-phosphate + holo-[ACP]. The protein operates within lipid metabolism; phospholipid metabolism. Catalyzes the transfer of an acyl group from acyl-ACP to glycerol-3-phosphate (G3P) to form lysophosphatidic acid (LPA). This enzyme can also utilize acyl-CoA as fatty acyl donor, but not acyl-PO(4). This chain is Glycerol-3-phosphate acyltransferase, found in Shigella flexneri serotype 5b (strain 8401).